A 396-amino-acid polypeptide reads, in one-letter code: Arginine biosynthesis bifunctional protein ArgJ (396 aa).

Thr147, Lys173, Thr184, Glu270, Asn391, and Ser396 together coordinate substrate. Thr184 serves as the catalytic Nucleophile.

The protein belongs to the ArgJ family. In terms of assembly, heterotetramer of two alpha and two beta chains.

The protein resides in the cytoplasm. It carries out the reaction N(2)-acetyl-L-ornithine + L-glutamate = N-acetyl-L-glutamate + L-ornithine. It catalyses the reaction L-glutamate + acetyl-CoA = N-acetyl-L-glutamate + CoA + H(+). Its pathway is amino-acid biosynthesis; L-arginine biosynthesis; L-ornithine and N-acetyl-L-glutamate from L-glutamate and N(2)-acetyl-L-ornithine (cyclic): step 1/1. The protein operates within amino-acid biosynthesis; L-arginine biosynthesis; N(2)-acetyl-L-ornithine from L-glutamate: step 1/4. Catalyzes two activities which are involved in the cyclic version of arginine biosynthesis: the synthesis of N-acetylglutamate from glutamate and acetyl-CoA as the acetyl donor, and of ornithine by transacetylation between N(2)-acetylornithine and glutamate. The chain is Arginine biosynthesis bifunctional protein ArgJ from Lactococcus lactis subsp. lactis (strain IL1403) (Streptococcus lactis).